The primary structure comprises 189 residues: Xanthine phosphoribosyltransferase (189 aa).

Xanthine-binding residues include Leu20 and Asn27. 5-phospho-alpha-D-ribose 1-diphosphate is bound at residue 127 to 131 (AYGNA). Position 155 (Lys155) interacts with xanthine.

This sequence belongs to the purine/pyrimidine phosphoribosyltransferase family. Xpt subfamily. As to quaternary structure, homodimer.

Its subcellular location is the cytoplasm. It catalyses the reaction XMP + diphosphate = xanthine + 5-phospho-alpha-D-ribose 1-diphosphate. It functions in the pathway purine metabolism; XMP biosynthesis via salvage pathway; XMP from xanthine: step 1/1. Functionally, converts the preformed base xanthine, a product of nucleic acid breakdown, to xanthosine 5'-monophosphate (XMP), so it can be reused for RNA or DNA synthesis. The sequence is that of Xanthine phosphoribosyltransferase from Bacteroides fragilis (strain ATCC 25285 / DSM 2151 / CCUG 4856 / JCM 11019 / LMG 10263 / NCTC 9343 / Onslow / VPI 2553 / EN-2).